Consider the following 345-residue polypeptide: MDGEDIPDFSSLKEETAYWKELSLKYKQSFQEARDELVEFQEGSRELEAELEAQLVQAEQRNRDLQADNQRLKYEVEALKEKLEHQYAQSYKQVSVLEDDLSQTRAIKEQLHKYVRELEQANDDLERAKRATIVSLEDFEQRLNQAIERNAFLESELDEKESLLVSVQRLKDEARDLRQELAVRERQQEVTRKSAPSSPTLDCEKMDSAVQASLSLPATPVGKGTENSFPSPKAIPNGFGTSPLTPSARISALNIVGDLLRKVGALESKLAACRNFAKDQASRKSYVPGSVNCGVMNSNGPECPRSGRATFFHKGAVNGFDPAPPPPGLGSSRPSSAPGMLPLSV.

Residues 28 to 190 adopt a coiled-coil conformation; it reads QSFQEARDEL…LAVRERQQEV (163 aa). A self-association region spans residues 56-166; it reads VQAEQRNRDL…LDEKESLLVS (111 aa). The interaction with KATNB1 stretch occupies residues 64 to 189; sequence DLQADNQRLK…ELAVRERQQE (126 aa). Residues 114–133 are required for interaction with PAFAH1B1; that stretch reads YVRELEQANDDLERAKRATI. Positions 175 to 345 are interaction with CENPF; sequence RDLRQELAVR…SAPGMLPLSV (171 aa). The tract at residues 189–256 is interaction with YWHAE; it reads EVTRKSAPSS…SARISALNIV (68 aa). An interaction with NEFL region spans residues 191–345; the sequence is TRKSAPSSPT…SAPGMLPLSV (155 aa). Positions 195-256 are interaction with KATNA1; it reads APSSPTLDCE…SARISALNIV (62 aa). Ser-215 is subject to Phosphoserine. Residues 217 to 240 are disordered; that stretch reads PATPVGKGTENSFPSPKAIPNGFG. Thr-219 carries the post-translational modification Phosphothreonine. Ser-231 carries the phosphoserine modification. The interval 241-280 is interaction with DISC1; that stretch reads TSPLTPSARISALNIVGDLLRKVGALESKLAACRNFAKDQ. Ser-242 bears the Phosphoserine; by CDK1 mark. Thr-245 is subject to Phosphothreonine; by CDK1 and MAPK1. Residues 256–291 form a required for localization to the centrosome and interaction with dynein, dynactin, tubulin gamma, PCM1 and PCNT region; the sequence is VGDLLRKVGALESKLAACRNFAKDQASRKSYVPGSV. Cys-273 is lipidated: S-palmitoyl cysteine; by ZDHHC2, ZDHHC3 and ZDHHC7. The tract at residues 314–345 is disordered; the sequence is KGAVNGFDPAPPPPGLGSSRPSSAPGMLPLSV. Residues 329-339 show a composition bias toward low complexity; the sequence is LGSSRPSSAPG. Position 344 is a phosphoserine (Ser-344).

The protein belongs to the nudE family. As to quaternary structure, interacts with PLEKHM1 (via N- and C-terminus). Interacts with dynactin, PCM1 and PCNT. Interacts (via C-terminus) with CENPF. Self-associates. Interacts with DISC1, dynein, tubulin gamma, KATNA1, KATNB1, microtubules, PAFAHB1 and YWHAE. Interacts directly with NEFL and indirectly with NEFH. Interacts with ZNF365. Interacts with GTP-bound RAB9A; the interaction may lead to RAB9A-dynein motor tethering. Post-translationally, phosphorylated by CDK1 and MAPK1. Phosphorylated in mitosis. Phosphorylated by CDK5. Phosphorylation by CDK5 promotes interaction with KATNA1 and YWHAE. In terms of processing, palmitoylation at Cys-273 reduces affinity for dynein. Expressed in brain, liver, lung and testis (at protein level). Expressed in brain, epididymis, eye, heart, kidney, large intestine, liver, ovary, pancreas, prostate, skeletal muscle, smooth muscle, spleen, submaxillary gland, testis, thymus and thyroid. Within the brain expression is pronounced in the cortex, hippocampus, olfactory bulb, striatum, thalamic and hypothalamic structures and in the molecular layer of the cerebellum. Largely excluded from cortical progenitor cells which express NDE1.

The protein resides in the cytoplasm. It localises to the cytoskeleton. Its subcellular location is the microtubule organizing center. The protein localises to the centrosome. It is found in the chromosome. The protein resides in the centromere. It localises to the kinetochore. Its subcellular location is the spindle. Required for organization of the cellular microtubule array and microtubule anchoring at the centrosome. May regulate microtubule organization at least in part by targeting the microtubule severing protein KATNA1 to the centrosome. Also positively regulates the activity of the minus-end directed microtubule motor protein dynein. May enhance dynein-mediated microtubule sliding by targeting dynein to the microtubule plus ends. Required for several dynein- and microtubule-dependent processes such as the maintenance of Golgi integrity, the centripetal motion of secretory vesicles and the coupling of the nucleus and centrosome. Also required during brain development for the migration of newly formed neurons from the ventricular/subventricular zone toward the cortical plate. Plays a role, together with DISC1, in the regulation of neurite outgrowth. Required for mitosis in some cell types but appears to be dispensible for mitosis in cortical neuronal progenitors, which instead requires NDE1. Facilitates the polymerization of neurofilaments from the individual subunits NEFH and NEFL. Positively regulates lysosome peripheral distribution and ruffled border formation in osteoclasts. Plays a role, together with DISC1, in the regulation of neurite outgrowth. May act as a RAB9A/B effector that tethers RAB9-associated late endosomes to the dynein motor for their retrograde transport to the trans-Golgi network. The chain is Nuclear distribution protein nudE-like 1 from Mus musculus (Mouse).